The primary structure comprises 957 residues: Glycine dehydrogenase (decarboxylating) (957 aa).

N6-(pyridoxal phosphate)lysine is present on Lys-702.

This sequence belongs to the GcvP family. As to quaternary structure, the glycine cleavage system is composed of four proteins: P, T, L and H. It depends on pyridoxal 5'-phosphate as a cofactor.

The enzyme catalyses N(6)-[(R)-lipoyl]-L-lysyl-[glycine-cleavage complex H protein] + glycine + H(+) = N(6)-[(R)-S(8)-aminomethyldihydrolipoyl]-L-lysyl-[glycine-cleavage complex H protein] + CO2. Its function is as follows. The glycine cleavage system catalyzes the degradation of glycine. The P protein binds the alpha-amino group of glycine through its pyridoxal phosphate cofactor; CO(2) is released and the remaining methylamine moiety is then transferred to the lipoamide cofactor of the H protein. This Bradyrhizobium sp. (strain ORS 278) protein is Glycine dehydrogenase (decarboxylating).